A 263-amino-acid chain; its full sequence is Acyl-[acyl-carrier-protein]--UDP-N-acetylglucosamine O-acyltransferase (263 aa).

Belongs to the transferase hexapeptide repeat family. LpxA subfamily. In terms of assembly, homotrimer.

Its subcellular location is the cytoplasm. It carries out the reaction a (3R)-hydroxyacyl-[ACP] + UDP-N-acetyl-alpha-D-glucosamine = a UDP-3-O-[(3R)-3-hydroxyacyl]-N-acetyl-alpha-D-glucosamine + holo-[ACP]. It functions in the pathway glycolipid biosynthesis; lipid IV(A) biosynthesis; lipid IV(A) from (3R)-3-hydroxytetradecanoyl-[acyl-carrier-protein] and UDP-N-acetyl-alpha-D-glucosamine: step 1/6. Its function is as follows. Involved in the biosynthesis of lipid A, a phosphorylated glycolipid that anchors the lipopolysaccharide to the outer membrane of the cell. The sequence is that of Acyl-[acyl-carrier-protein]--UDP-N-acetylglucosamine O-acyltransferase from Campylobacter jejuni subsp. jejuni serotype O:6 (strain 81116 / NCTC 11828).